The sequence spans 150 residues: Oleosin Ara h 10.0102 (150 aa).

The next 2 membrane-spanning stretches (helical) occupy residues 39–59 (VIAV…AGLA) and 73–93 (LFIL…LSVA).

The protein belongs to the oleosin family. As to expression, expressed in seeds (at protein level).

The protein resides in the lipid droplet. It is found in the membrane. Functionally, may have a structural role to stabilize the lipid body during desiccation of the seed by preventing coalescence of the oil. Probably interacts with both lipid and phospholipid moieties of lipid bodies. May also provide recognition signals for specific lipase anchorage in lipolysis during seedling growth. This chain is Oleosin Ara h 10.0102, found in Arachis hypogaea (Peanut).